We begin with the raw amino-acid sequence, 181 residues long: Endoglucanase (181 aa).

A disulfide bond links Cys4 and Cys16. Asp24 serves as the catalytic Nucleophile. 5 disulfides stabilise this stretch: Cys30/Cys69, Cys32/Cys176, Cys65/Cys178, Cys72/Cys157, and Cys103/Cys113. The active-site Proton donor is Asp132.

Digestive gland.

It catalyses the reaction Endohydrolysis of (1-&gt;4)-beta-D-glucosidic linkages in cellulose, lichenin and cereal beta-D-glucans.. Functionally, active towards the soluble carboxymethylcellulose (CMC). Possesses expansin activity too. This chain is Endoglucanase, found in Mytilus edulis (Blue mussel).